The following is a 332-amino-acid chain: tRNA-dihydrouridine(20/20a) synthase (332 aa).

Residues 20–22 and Gln-73 contribute to the FMN site; that span reads PMM. The Proton donor role is filled by Cys-103. Residues Lys-142, His-174, 214–216, and 236–237 each bind FMN; these read NGG and GR.

Belongs to the Dus family. DusA subfamily. FMN serves as cofactor.

The catalysed reaction is 5,6-dihydrouridine(20) in tRNA + NADP(+) = uridine(20) in tRNA + NADPH + H(+). The enzyme catalyses 5,6-dihydrouridine(20) in tRNA + NAD(+) = uridine(20) in tRNA + NADH + H(+). It carries out the reaction 5,6-dihydrouridine(20a) in tRNA + NADP(+) = uridine(20a) in tRNA + NADPH + H(+). It catalyses the reaction 5,6-dihydrouridine(20a) in tRNA + NAD(+) = uridine(20a) in tRNA + NADH + H(+). In terms of biological role, catalyzes the synthesis of 5,6-dihydrouridine (D), a modified base found in the D-loop of most tRNAs, via the reduction of the C5-C6 double bond in target uridines. Specifically modifies U20 and U20a in tRNAs. The sequence is that of tRNA-dihydrouridine(20/20a) synthase from Pseudomonas aeruginosa (strain ATCC 15692 / DSM 22644 / CIP 104116 / JCM 14847 / LMG 12228 / 1C / PRS 101 / PAO1).